Here is a 783-residue protein sequence, read N- to C-terminus: Endonuclease MutS2 (783 aa).

Residue 337 to 344 (GPNTGGKT) coordinates ATP. The region spanning 708 to 783 (LHLRGYRYEE…GFGVTVAELK (76 aa)) is the Smr domain.

This sequence belongs to the DNA mismatch repair MutS family. MutS2 subfamily. Homodimer. Binds to stalled ribosomes, contacting rRNA.

Functionally, endonuclease that is involved in the suppression of homologous recombination and thus may have a key role in the control of bacterial genetic diversity. In terms of biological role, acts as a ribosome collision sensor, splitting the ribosome into its 2 subunits. Detects stalled/collided 70S ribosomes which it binds and splits by an ATP-hydrolysis driven conformational change. Acts upstream of the ribosome quality control system (RQC), a ribosome-associated complex that mediates the extraction of incompletely synthesized nascent chains from stalled ribosomes and their subsequent degradation. Probably generates substrates for RQC. The sequence is that of Endonuclease MutS2 from Staphylococcus haemolyticus (strain JCSC1435).